The following is an 85-amino-acid chain: Large ribosomal subunit protein bL27 (85 aa).

The disordered stretch occupies residues 1–21; that stretch reads MAHKKGQGSTQNNRDSAGRRL.

This sequence belongs to the bacterial ribosomal protein bL27 family.

This Wolinella succinogenes (strain ATCC 29543 / DSM 1740 / CCUG 13145 / JCM 31913 / LMG 7466 / NCTC 11488 / FDC 602W) (Vibrio succinogenes) protein is Large ribosomal subunit protein bL27.